Consider the following 485-residue polypeptide: Taxane 13-alpha-hydroxylase (485 aa).

Residue C431 coordinates heme.

Belongs to the cytochrome P450 family. Heme serves as cofactor.

The catalysed reaction is taxa-4(20),11-dien-5alpha-ol + reduced [NADPH--hemoprotein reductase] + O2 = taxa-4(20),11-dien-5alpha,13alpha-diol + oxidized [NADPH--hemoprotein reductase] + H2O + H(+). The protein operates within alkaloid biosynthesis; taxol biosynthesis. In terms of biological role, involved in the transformation of a taxadienyl acetate by hydroxylation at C13 to yield taxadien-5-alpha-acetoxy-13-alpha-ol. This is Taxane 13-alpha-hydroxylase (CYP725A2) from Taxus cuspidata (Japanese yew).